The chain runs to 640 residues: Threonine--tRNA ligase (640 aa).

The region spanning Met-1 to Thr-60 is the TGS domain. Positions Asp-241–Pro-538 are catalytic. Residues Cys-334, His-385, and His-515 each contribute to the Zn(2+) site.

The protein belongs to the class-II aminoacyl-tRNA synthetase family. Homodimer. Zn(2+) is required as a cofactor.

Its subcellular location is the cytoplasm. It carries out the reaction tRNA(Thr) + L-threonine + ATP = L-threonyl-tRNA(Thr) + AMP + diphosphate + H(+). Functionally, catalyzes the attachment of threonine to tRNA(Thr) in a two-step reaction: L-threonine is first activated by ATP to form Thr-AMP and then transferred to the acceptor end of tRNA(Thr). Also edits incorrectly charged L-seryl-tRNA(Thr). This Listeria monocytogenes serovar 1/2a (strain ATCC BAA-679 / EGD-e) protein is Threonine--tRNA ligase.